A 267-amino-acid polypeptide reads, in one-letter code: PHD finger protein ALFIN-LIKE 7 (267 aa).

The segment at T162–D207 is disordered. The span at S165–P188 shows a compositional bias: low complexity. Acidic residues predominate over residues D196–D207. Residues A211–K263 form a PHD-type zinc finger.

It belongs to the Alfin family. As to quaternary structure, interacts with H3K4me3 and to a lesser extent with H3K4me2.

It is found in the nucleus. Histone-binding component that specifically recognizes H3 tails trimethylated on 'Lys-4' (H3K4me3), which mark transcription start sites of virtually all active genes. The protein is PHD finger protein ALFIN-LIKE 7 of Oryza sativa subsp. indica (Rice).